Reading from the N-terminus, the 88-residue chain is Large ribosomal subunit protein bL27 (88 aa).

Belongs to the bacterial ribosomal protein bL27 family.

This is Large ribosomal subunit protein bL27 from Mycolicibacterium vanbaalenii (strain DSM 7251 / JCM 13017 / BCRC 16820 / KCTC 9966 / NRRL B-24157 / PYR-1) (Mycobacterium vanbaalenii).